Here is a 246-residue protein sequence, read N- to C-terminus: Acetoacetate decarboxylase (246 aa).

Lys116 functions as the Schiff-base intermediate with acetoacetate in the catalytic mechanism.

It belongs to the ADC family.

The enzyme catalyses acetoacetate + H(+) = acetone + CO2. Its function is as follows. Catalyzes the conversion of acetoacetate to acetone and carbon dioxide. The protein is Acetoacetate decarboxylase of Burkholderia cenocepacia (strain ATCC BAA-245 / DSM 16553 / LMG 16656 / NCTC 13227 / J2315 / CF5610) (Burkholderia cepacia (strain J2315)).